The chain runs to 500 residues: Protein shisa-6 (500 aa).

Positions 1–25 (MALRRLLLLLLLSLESLDLLPSVHG) are cleaved as a signal peptide. Topologically, residues 26–174 (ARGRAANRTL…NKYDPEKDKT (149 aa)) are extracellular. 2 N-linked (GlcNAc...) asparagine glycosylation sites follow: asparagine 32 and asparagine 59. A disordered region spans residues 52–73 (ARGGRELNGTARAPGIPEAGSR). The helical transmembrane segment at 175–195 (NFTVYITCGVIAFVIVAGVFA) threads the bilayer. The Cytoplasmic portion of the chain corresponds to 196–500 (KVSYDKAHRP…YTASKTEVTV (305 aa)). Residues 240–255 (TSPKENTPVRSSSKNH) show a composition bias toward polar residues. Disordered regions lie at residues 240–269 (TSPKENTPVRSSSKNHYTPVRTAKQTPEKP) and 349–378 (SQQKPLPRERPRRPIRAMSQDRVLSPDRGL). A phosphoserine mark is found at serine 391, serine 397, and serine 409. Phosphothreonine is present on threonine 433. The disordered stretch occupies residues 444-470 (MHSHPSASNNSYATLGQSQTAAKRHAF). Residues 448–464 (PSASNNSYATLGQSQTA) are compositionally biased toward polar residues. Phosphothreonine is present on threonine 477. A PDZ-binding motif is present at residues 497–500 (EVTV).

It belongs to the shisa family. Component of the postsynaptic hippocampal AMPA-type glutamate receptor (AMPAR) complex, at least composed of pore forming AMPAR subunits GRIA1, GRIA2 and GRIA3 and AMPAR auxiliary proteins SHISA6 and SHISA7. Interacts (via PDZ-binding motif) with DLG4/PSD-95 (via PDZ domain); the interaction is direct. In terms of tissue distribution, expressed in the developing ventral mesencephalon.

It is found in the membrane. The protein resides in the postsynaptic density. Its function is as follows. Involved in maintenance of high-frequency synaptic transmission at hippocampal CA3-CA1 synapses. Regulates AMPA-type glutamate receptor (AMPAR) immobilization at postsynaptic density keeping the channels in an activated state in the presence of glutamate and preventing synaptic depression. May play a role in self-renewal and differentiation of spermatogonial stem cells by inhibiting canonical Wnt signaling pathway. The protein is Protein shisa-6 of Homo sapiens (Human).